The chain runs to 756 residues: LIM domain and actin-binding protein 1 (756 aa).

The residue at position 1 (Met1) is an N-acetylmethionine. A phosphoserine mark is found at Ser15 and Ser55. Residues 44-56 are compositionally biased toward basic and acidic residues; sequence AAEEANMEKRRSN. Disordered regions lie at residues 44 to 183 and 204 to 377; these read AAEE…SNKI and QTKI…AVKK. Residues 107–118 are compositionally biased toward low complexity; that stretch reads EVASSSASGVEA. Ser130 bears the Phosphoserine mark. Residues 140–173 show a composition bias toward basic and acidic residues; it reads RIKDTEHLKDHSAESKKMENCLAESRHEVGKPET. Residues 164-166 carry the Required for interaction with NPC1L1 motif; the sequence is SRH. The residue at position 221 (Ser221) is a Phosphoserine. Tyr225 bears the Phosphotyrosine mark. Phosphoserine occurs at positions 226 and 238. A compositionally biased stretch (basic and acidic residues) spans 245–254; sequence EKSESRRNLE. Ser259 carries the post-translational modification Phosphoserine. Over residues 274–287 the composition is skewed to polar residues; it reads VSKQSSSTNYTNEL. Residues 294-303 show a composition bias toward basic and acidic residues; the sequence is IKTHKLEQKE. Phosphoserine occurs at positions 339, 346, 358, 365, and 370. Positions 384 to 444 constitute an LIM zinc-binding domain; it reads ETCVECQKTV…KPHFNQLFKS (61 aa). An N6-succinyllysine modification is found at Lys435. Ser486 is modified (phosphoserine). A required for interaction with MYO5B region spans residues 489 to 509; sequence VEDAPIAKVGVLTASMEAKAS. A disordered region spans residues 508–726; the sequence is ASSQLEKEDK…TTQKQKSQDV (219 aa). Positions 512-523 are enriched in basic and acidic residues; the sequence is LEKEDKPAETKK. Over residues 533–542 the composition is skewed to low complexity; that stretch reads ELSSSGSALE. The span at 552–563 shows a compositional bias: basic and acidic residues; that stretch reads WPPEDEVSKPEA. Residues Ser597, Ser600, Ser605, and Ser613 each carry the phosphoserine modification. Residues 627 to 637 show a composition bias toward basic and acidic residues; it reads AERKQMEKASA. The segment covering 638 to 651 has biased composition (polar residues); it reads SEKNGSVGKTTWPS. A compositionally biased stretch (basic and acidic residues) spans 652–667; it reads KESRGGEAAGRSKEVQ. Positions 691–721 are enriched in polar residues; the sequence is LQQQSPLEPKSKNWSSFADNTSAKEFTTQKQ. Residues Ser695, Ser723, and Ser738 each carry the phosphoserine modification.

In terms of assembly, interacts with NPC1L1; bridges NPC1L1 with MYO5B. Interacts with MYO5B; bridges MYO5B with NPC1L1. Interacts with PXN; this complex stabilizes actin dynamics. Interacts with F-actin and G-actin. Interacts with LUZP1 (via C-terminus); both proteins restrict ciliation and may work together to regulate this process. Binds RAB40B (GTP-bound); interaction influences LIMA1 subcellular localization in lamellipodia during cell migration. Phosphorylation of the C-terminal region by MAPK1/MAPK3 reduces its association with F-actin and contributes to actin filament reorganization and enhances cell motility. Post-translationally, ubiquitinated by the ECS(RAB40B) complex leading to its degradation. Widely expressed. Highest levels of isoform 2 are expressed in lung, spleen and small intestine. Isoform 2 is expressed at higher levels than isoform 1 in most tissues except liver, fat and kidney. Isoform 1 and isoform 2 are expressed at low levels in skeletal muscle, heart, stomach and lymph.

It is found in the cytoplasm. It localises to the cell junction. The protein resides in the focal adhesion. Its subcellular location is the cytoskeleton. The protein localises to the stress fiber. It is found in the cell membrane. It localises to the cell projection. The protein resides in the ruffle. Its subcellular location is the lamellipodium. Its function is as follows. Actin-binding protein involved in actin cytoskeleton regulation and dynamics. Increases the number and size of actin stress fibers and inhibits membrane ruffling. Inhibits actin filament depolymerization. Bundles actin filaments, delays filament nucleation and reduces formation of branched filaments. Acts as a negative regulator of primary cilium formation. Plays a role in cholesterol homeostasis. Influences plasma cholesterol levels through regulation of intestinal cholesterol absorption. May act as a scaffold protein by regulating NPC1L1 transportation, an essential protein for cholesterol absorption, to the plasma membrane by recruiting MYO5B to NPC1L1, and thus facilitates cholesterol uptake. The polypeptide is LIM domain and actin-binding protein 1 (Sus scrofa (Pig)).